The following is a 931-amino-acid chain: Aconitate hydratase A (931 aa).

Residues 402–454 are disordered; it reads SASPVDEASAESFPASDAPAYGSQENGAGAPQHADGTGAAVPSNPVTVTAPDG. The [4Fe-4S] cluster site is built by C472, C538, and C541.

Belongs to the aconitase/IPM isomerase family. It depends on [4Fe-4S] cluster as a cofactor.

It catalyses the reaction citrate = D-threo-isocitrate. It carries out the reaction citrate = cis-aconitate + H2O. The enzyme catalyses cis-aconitate + H2O = D-threo-isocitrate. Its pathway is carbohydrate metabolism; tricarboxylic acid cycle; isocitrate from oxaloacetate: step 2/2. In terms of biological role, catalyzes the reversible isomerization of citrate to isocitrate via cis-aconitate in the tricarboxylic acid (TCA) cycle. Aconitase activity is important for the initiation of morphological and physiological differentiation of S.viridochromogenes. In addition, the apo form of AcnA (lacking the [4Fe-4S] cluster) functions as a RNA-binding regulatory protein, which binds to iron responsive elements (IREs) located on the untranslated region of certain mRNAs, including recA and ftsZ. Binding to IRE-like structures probably alters the target mRNA stability and regulates the protein amount. The apo form plays a regulatory role in oxidative stress response. The chain is Aconitate hydratase A from Streptomyces viridochromogenes (strain DSM 40736 / JCM 4977 / BCRC 1201 / Tue 494).